The sequence spans 269 residues: Interleukin-1 beta (269 aa).

The propeptide occupies 1-116 (MAEVPELASE…TRNNDACVHD (116 aa)).

It belongs to the IL-1 family. Monomer. In its precursor form, weakly interacts with full-length MEFV; the mature cytokine does not interact at all. Interacts with integrins ITGAV:ITGBV and ITGA5:ITGB1; integrin-binding is required for IL1B signaling. Interacts with cargo receptor TMED10; the interaction is direct and is required for the secretion of IL1B mature form. Interacts with HSP90AB1; the interaction facilitates cargo translocation into the ERGIC. Interacts with HSP90B1; the interaction facilitates cargo translocation into the ERGIC.

It is found in the cytoplasm. Its subcellular location is the cytosol. The protein resides in the secreted. It localises to the lysosome. The protein localises to the extracellular exosome. Functionally, potent pro-inflammatory cytokine. Initially discovered as the major endogenous pyrogen, induces prostaglandin synthesis, neutrophil influx and activation, T-cell activation and cytokine production, B-cell activation and antibody production, and fibroblast proliferation and collagen production. Promotes Th17 differentiation of T-cells. Synergizes with IL12/interleukin-12 to induce IFNG synthesis from T-helper 1 (Th1) cells. Plays a role in angiogenesis by inducing VEGF production synergistically with TNF and IL6. Involved in transduction of inflammation downstream of pyroptosis: its mature form is specifically released in the extracellular milieu by passing through the gasdermin-D (GSDMD) pore. The sequence is that of Interleukin-1 beta (IL1B) from Macaca nemestrina (Pig-tailed macaque).